The chain runs to 1225 residues: DNA-directed RNA polymerase subunit beta' (1225 aa).

Zn(2+)-binding residues include C60, C62, C75, and C78. Mg(2+) contacts are provided by D450, D452, and D454. Zn(2+) contacts are provided by C818, C892, C899, and C902.

This sequence belongs to the RNA polymerase beta' chain family. The RNAP catalytic core consists of 2 alpha, 1 beta, 1 beta' and 1 omega subunit. When a sigma factor is associated with the core the holoenzyme is formed, which can initiate transcription. It depends on Mg(2+) as a cofactor. Zn(2+) is required as a cofactor.

The catalysed reaction is RNA(n) + a ribonucleoside 5'-triphosphate = RNA(n+1) + diphosphate. Functionally, DNA-dependent RNA polymerase catalyzes the transcription of DNA into RNA using the four ribonucleoside triphosphates as substrates. The chain is DNA-directed RNA polymerase subunit beta' from Streptococcus pneumoniae (strain P1031).